The sequence spans 309 residues: Ribosomal RNA small subunit methyltransferase H (309 aa).

S-adenosyl-L-methionine-binding positions include 41 to 43 (GGH), D61, F85, D102, and Q109.

Belongs to the methyltransferase superfamily. RsmH family.

The protein resides in the cytoplasm. The enzyme catalyses cytidine(1402) in 16S rRNA + S-adenosyl-L-methionine = N(4)-methylcytidine(1402) in 16S rRNA + S-adenosyl-L-homocysteine + H(+). Specifically methylates the N4 position of cytidine in position 1402 (C1402) of 16S rRNA. The protein is Ribosomal RNA small subunit methyltransferase H of Albidiferax ferrireducens (strain ATCC BAA-621 / DSM 15236 / T118) (Rhodoferax ferrireducens).